Here is a 331-residue protein sequence, read N- to C-terminus: Anthranilate phosphoribosyltransferase (331 aa).

5-phospho-alpha-D-ribose 1-diphosphate is bound by residues Gly79, Gly82 to Asp83, Ser87, Asn89 to Thr92, Lys107 to Ser115, and Ser119. Residue Gly79 participates in anthranilate binding. Ser91 contributes to the Mg(2+) binding site. Asn110 is an anthranilate binding site. Arg165 is an anthranilate binding site. The Mg(2+) site is built by Asp223 and Glu224.

Belongs to the anthranilate phosphoribosyltransferase family. Homodimer. Mg(2+) serves as cofactor.

The catalysed reaction is N-(5-phospho-beta-D-ribosyl)anthranilate + diphosphate = 5-phospho-alpha-D-ribose 1-diphosphate + anthranilate. The protein operates within amino-acid biosynthesis; L-tryptophan biosynthesis; L-tryptophan from chorismate: step 2/5. In terms of biological role, catalyzes the transfer of the phosphoribosyl group of 5-phosphorylribose-1-pyrophosphate (PRPP) to anthranilate to yield N-(5'-phosphoribosyl)-anthranilate (PRA). The chain is Anthranilate phosphoribosyltransferase from Buchnera aphidicola subsp. Schlechtendalia chinensis.